The following is a 985-amino-acid chain: Probable beta-galactosidase C (985 aa).

The first 23 residues, 1–23, serve as a signal peptide directing secretion; that stretch reads MRILSLLFLLLLGFLAGNRVVSA. Residues Tyr-82, Asn-127, Ala-128, Glu-129, and Asn-187 each contribute to the substrate site. The active-site Proton donor is the Glu-188. Tyr-251 lines the substrate pocket. A disulfide bond links Cys-257 and Cys-304. Asn-276 carries an N-linked (GlcNAc...) asparagine glycan. Glu-287 acts as the Nucleophile in catalysis. Residue Tyr-353 participates in substrate binding. N-linked (GlcNAc...) asparagine glycosylation is found at Asn-391, Asn-434, Asn-517, Asn-602, Asn-677, Asn-715, Asn-720, and Asn-759.

Belongs to the glycosyl hydrolase 35 family.

Its subcellular location is the secreted. The catalysed reaction is Hydrolysis of terminal non-reducing beta-D-galactose residues in beta-D-galactosides.. Functionally, cleaves beta-linked terminal galactosyl residues from gangliosides, glycoproteins, and glycosaminoglycans. This Aspergillus clavatus (strain ATCC 1007 / CBS 513.65 / DSM 816 / NCTC 3887 / NRRL 1 / QM 1276 / 107) protein is Probable beta-galactosidase C (lacC).